The sequence spans 174 residues: CASP-like protein 4D2 (174 aa).

Over 1 to 14 the chain is Cytoplasmic; the sequence is MAPPPPSPPAVSLK. The helical transmembrane segment at 15–35 threads the bilayer; it reads VLLLLLRVLTGVFLVIALIIL. Residues 36-60 are Extracellular-facing; the sequence is STNSVTIVSQGSALKFHFKDVYAYR. A helical membrane pass occupies residues 61-81; it reads YMLSAAVIGLVYAVIQLFFTI. Topologically, residues 82–97 are cytoplasmic; sequence SEFATGVKNPFNYQLD. The helical transmembrane segment at 98-118 threads the bilayer; that stretch reads FYGDKLISYLVATGSAAGFGV. The Extracellular segment spans residues 119–150; the sequence is TKDLKDTFLALVALDSTDPVDKFFSKGYASAS. The helical transmembrane segment at 151 to 171 threads the bilayer; the sequence is LLLFAFICLAVLSVFSSFAMA. Over 172–174 the chain is Cytoplasmic; that stretch reads KRN.

Belongs to the Casparian strip membrane proteins (CASP) family. Homodimer and heterodimers.

The protein localises to the cell membrane. This Arabidopsis thaliana (Mouse-ear cress) protein is CASP-like protein 4D2.